The sequence spans 90 residues: LYR motif-containing protein 2 (90 aa).

A mitochondrion-targeting transit peptide spans 1-19; that stretch reads MASSRLPASALTLKQFIQR.

This sequence belongs to the complex I LYR family.

The protein resides in the mitochondrion. Its function is as follows. Involved in efficient integration of the N-module into mitochondrial respiratory chain complex I. The protein is LYR motif-containing protein 2 (lyrm2) of Salmo salar (Atlantic salmon).